We begin with the raw amino-acid sequence, 411 residues long: Squalene synthase (411 aa).

NADP(+) contacts are provided by R49 and R74. Residues D77, E80, and D81 each coordinate Mg(2+). NADP(+) is bound by residues R212, K312, and R314. The chain crosses the membrane as a helical span at residues 388-408 (SPVLIVVIFIILAIILAQLFG).

The protein belongs to the phytoene/squalene synthase family. Mg(2+) is required as a cofactor.

The protein localises to the membrane. It carries out the reaction 2 (2E,6E)-farnesyl diphosphate + NADH + H(+) = squalene + 2 diphosphate + NAD(+). The enzyme catalyses 2 (2E,6E)-farnesyl diphosphate + NADPH + H(+) = squalene + 2 diphosphate + NADP(+). In terms of biological role, converts farnesyl diphosphate (FPP) into squalene, a precursor for sterol biosynthesis in eukaryotes. The chain is Squalene synthase from Solanum lycopersicum (Tomato).